Reading from the N-terminus, the 517-residue chain is Cytochrome P450 monooxygenase 124 (517 aa).

The chain crosses the membrane as a helical span at residues 3–23 (SLLVLFVSLLALGALKKHLDF). Residue C453 participates in heme binding.

The protein belongs to the cytochrome P450 family. Requires heme as cofactor.

It is found in the membrane. It functions in the pathway secondary metabolite biosynthesis. Cytochrome P450 monooxygenase that is able to use trans-stilbene as a substrate for oxidation. This is Cytochrome P450 monooxygenase 124 from Postia placenta (strain ATCC 44394 / Madison 698-R) (Brown rot fungus).